Reading from the N-terminus, the 887-residue chain is Tiger protein O1 (887 aa).

The signal sequence occupies residues 1–21 (MEKKLLIIVIVFLFSTIQVFC). The Extracellular portion of the chain corresponds to 22–845 (RIDDKTFVIS…SLSKKSIILL (824 aa)). Residues Asn32, Asn70, Asn186, Asn207, Asn219, Asn259, Asn297, Asn314, Asn325, Asn338, Asn354, Asn393, Asn431, Asn588, Asn629, Asn652, Asn687, Asn710, Asn720, Asn730, Asn775, Asn788, Asn811, and Asn816 are each glycosylated (N-linked (GlcNAc...) asparagine). Residues 277-365 (NSVPYSKGGL…TNENKLLFNY (89 aa)) form the IPT/TIG 1 domain. An IPT/TIG 2 domain is found at 710–767 (NTSSINVNGGNLTIYGKNFYNVSNIKVEVDNQLKCNKIEFINLNSLTCFLPPFIETLF). A disordered region spans residues 811-835 (NDTSENSTNDILNHEKNNNNQKDGS). A helical transmembrane segment spans residues 846–866 (SILLPSFIILIVSLAIVILVI). The Cytoplasmic segment spans residues 867 to 887 (KRNKTKHSKNMSSKEKELMKQ).

The protein localises to the membrane. In Dictyostelium discoideum (Social amoeba), this protein is Tiger protein O1 (tgrO1).